A 428-amino-acid polypeptide reads, in one-letter code: Flap endonuclease 1-B (428 aa).

The segment at 1–132 (MGIKGLTKVL…KELAKRSLKR (132 aa)) is N-domain. D34 serves as a coordination point for Mg(2+). R98 is a binding site for DNA. Mg(2+) is bound by residues D114, E186, E188, D207, and D209. An I-domain region spans residues 150 to 281 (AVEKFSKRTV…QRALKLIRQH (132 aa)). E186 is a DNA binding site. DNA is bound by residues G259 and D261. D261 is a binding site for Mg(2+).

Belongs to the XPG/RAD2 endonuclease family. FEN1 subfamily. Interacts with PCNA. Three molecules of FEN1 bind to one PCNA trimer with each molecule binding to one PCNA monomer. PCNA stimulates the nuclease activity without altering cleavage specificity. Mg(2+) serves as cofactor. In terms of processing, phosphorylated. Phosphorylation upon DNA damage induces relocalization to the nuclear plasma.

Its subcellular location is the nucleus. It is found in the nucleolus. The protein resides in the nucleoplasm. It localises to the mitochondrion. Functionally, structure-specific nuclease with 5'-flap endonuclease and 5'-3' exonuclease activities involved in DNA replication and repair. During DNA replication, cleaves the 5'-overhanging flap structure that is generated by displacement synthesis when DNA polymerase encounters the 5'-end of a downstream Okazaki fragment. It enters the flap from the 5'-end and then tracks to cleave the flap base, leaving a nick for ligation. Also involved in the long patch base excision repair (LP-BER) pathway, by cleaving within the apurinic/apyrimidinic (AP) site-terminated flap. Acts as a genome stabilization factor that prevents flaps from equilibrating into structures that lead to duplications and deletions. Also possesses 5'-3' exonuclease activity on nicked or gapped double-stranded DNA, and exhibits RNase H activity. Also involved in replication and repair of rDNA and in repairing mitochondrial DNA. The sequence is that of Flap endonuclease 1-B from Sorghum bicolor (Sorghum).